Here is a 760-residue protein sequence, read N- to C-terminus: 5-methyltetrahydropteroyltriglutamate--homocysteine methyltransferase (760 aa).

Residues 17–20 (RELK) and K118 contribute to the 5-methyltetrahydropteroyltri-L-glutamate site. Residues 436-438 (IGS) and E489 each bind L-homocysteine. Residues 436-438 (IGS) and E489 each bind L-methionine. 5-methyltetrahydropteroyltri-L-glutamate-binding positions include 520–521 (RC) and W566. An L-homocysteine-binding site is contributed by D604. Residue D604 participates in L-methionine binding. Position 610 (E610) interacts with 5-methyltetrahydropteroyltri-L-glutamate. H646, C648, and E670 together coordinate Zn(2+). The active-site Proton donor is H699. Residue C731 coordinates Zn(2+).

It belongs to the vitamin-B12 independent methionine synthase family. Zn(2+) is required as a cofactor.

The catalysed reaction is 5-methyltetrahydropteroyltri-L-glutamate + L-homocysteine = tetrahydropteroyltri-L-glutamate + L-methionine. It functions in the pathway amino-acid biosynthesis; L-methionine biosynthesis via de novo pathway; L-methionine from L-homocysteine (MetE route): step 1/1. In terms of biological role, catalyzes the transfer of a methyl group from 5-methyltetrahydrofolate to homocysteine resulting in methionine formation. The polypeptide is 5-methyltetrahydropteroyltriglutamate--homocysteine methyltransferase (Vibrio harveyi (Beneckea harveyi)).